The primary structure comprises 605 residues: DNA primase (605 aa).

The segment at 38-62 (CPFHDEKTPSFTVSEDKQICHCFGC) adopts a CHC2-type zinc-finger fold. One can recognise a Toprim domain in the interval 260-341 (DEIVLLEGFM…NVFVIQLPSG (82 aa)). Positions 266, 310, and 312 each coordinate Mg(2+).

This sequence belongs to the DnaG primase family. Monomer. Interacts with DnaB. Zn(2+) is required as a cofactor. Mg(2+) serves as cofactor.

The enzyme catalyses ssDNA + n NTP = ssDNA/pppN(pN)n-1 hybrid + (n-1) diphosphate.. Its function is as follows. RNA polymerase that catalyzes the synthesis of short RNA molecules used as primers for DNA polymerase during DNA replication. This Staphylococcus aureus (strain MW2) protein is DNA primase.